We begin with the raw amino-acid sequence, 166 residues long: Large ribosomal subunit protein uL10 (166 aa).

This sequence belongs to the universal ribosomal protein uL10 family. Part of the ribosomal stalk of the 50S ribosomal subunit. The N-terminus interacts with L11 and the large rRNA to form the base of the stalk. The C-terminus forms an elongated spine to which L12 dimers bind in a sequential fashion forming a multimeric L10(L12)X complex.

Functionally, forms part of the ribosomal stalk, playing a central role in the interaction of the ribosome with GTP-bound translation factors. This chain is Large ribosomal subunit protein uL10, found in Streptococcus agalactiae serotype III (strain NEM316).